The following is a 636-amino-acid chain: uncharacterized protein (636 aa).

A run of 3 helical transmembrane segments spans residues 12–32 (AVIY…FGSI), 34–54 (IMHL…TTTG), and 75–95 (IGAG…FMSF). The region spanning 112-231 (KNHFILCGFG…KKAGANRIIS (120 aa)) is the RCK N-terminal domain.

It localises to the cell membrane. This is an uncharacterized protein from Methanothermus fervidus (strain ATCC 43054 / DSM 2088 / JCM 10308 / V24 S).